The sequence spans 347 residues: NADH-ubiquinone oxidoreductase chain 2 (347 aa).

The next 11 helical transmembrane spans lie at 1–21 (MNPL…IITM), 25–45 (HWLT…PLIM), 59–79 (YFLI…INFM), 96–116 (TIIL…FWVP), 123–143 (LLST…SILY), 153–173 (IILA…LNQT), 178–198 (IMAY…IYNP), 200–220 (LMLL…TILI), 239–259 (ILMM…PLSG), 278–298 (ISLT…RLIY), and 325–345 (FLPT…MMFI).

Belongs to the complex I subunit 2 family. Core subunit of respiratory chain NADH dehydrogenase (Complex I) which is composed of 45 different subunits. Interacts with TMEM242.

It localises to the mitochondrion inner membrane. It carries out the reaction a ubiquinone + NADH + 5 H(+)(in) = a ubiquinol + NAD(+) + 4 H(+)(out). Functionally, core subunit of the mitochondrial membrane respiratory chain NADH dehydrogenase (Complex I) that is believed to belong to the minimal assembly required for catalysis. Complex I functions in the transfer of electrons from NADH to the respiratory chain. The immediate electron acceptor for the enzyme is believed to be ubiquinone. The protein is NADH-ubiquinone oxidoreductase chain 2 of Oryzorictes hova (Hova rice tenrec).